The sequence spans 4158 residues: Dynein axonemal heavy chain 6 (4158 aa).

Residues 1–1433 (MTFRATDSEF…VARMALSQYT (1433 aa)) are stem. 192–199 (IIRENEHL) is an ATP binding site. Residues 805-859 (CVHLGSDLEELNNEVNEVKLQAQDPQILDISADQDKIRLILNNLQSVLADLQKRA) adopt a coiled-coil conformation. 4 AAA regions span residues 1434–1655 (YGYE…VLVM), 1715–1948 (STIV…KKCS), 2058–2306 (KYNR…CVQG), and 2408–2659 (DYNL…LRRR). ATP-binding positions include 1472 to 1479 (GPAGTGKT), 1753 to 1760 (GPTGGGKT), 2096 to 2103 (GITGVGKS), and 2447 to 2454 (GVGGTGKQ). The segment at 2676–2961 (SMLSEKRKQI…KTMALTKARL (286 aa)) is stalk. The stretch at 2901–2996 (KRQKLRAAQA…EEISNITGNV (96 aa)) forms a coiled coil. AAA regions lie at residues 3042 to 3272 (LGDP…AIKT) and 3509 to 3730 (LTDF…NLKL).

It belongs to the dynein heavy chain family. As to quaternary structure, the dynein complex consists of at least two heavy chains and a number of intermediate and light chains. In terms of tissue distribution, expressed in several tissues, including brain, pituitary, testis and trachea, with highest levels in testis.

It is found in the cytoplasm. Its subcellular location is the cytoskeleton. The protein localises to the cilium axoneme. Force generating protein of respiratory cilia. Produces force towards the minus ends of microtubules. Dynein has ATPase activity; the force-producing power stroke is thought to occur on release of ADP. The chain is Dynein axonemal heavy chain 6 from Homo sapiens (Human).